A 334-amino-acid polypeptide reads, in one-letter code: Nucleoid-associated protein YPK_2796 (334 aa).

It belongs to the YejK family.

The protein localises to the cytoplasm. Its subcellular location is the nucleoid. This is Nucleoid-associated protein YPK_2796 from Yersinia pseudotuberculosis serotype O:3 (strain YPIII).